A 100-amino-acid chain; its full sequence is NADH-quinone oxidoreductase subunit K (100 aa).

3 helical membrane-spanning segments follow: residues 1 to 21, 28 to 48, and 64 to 84; these read MIGL…GLAG, ILLL…GFIA, and FIIA…ILWF.

Belongs to the complex I subunit 4L family. NDH-1 is composed of 14 different subunits. Subunits NuoA, H, J, K, L, M, N constitute the membrane sector of the complex.

It is found in the cell inner membrane. It catalyses the reaction a quinone + NADH + 5 H(+)(in) = a quinol + NAD(+) + 4 H(+)(out). NDH-1 shuttles electrons from NADH, via FMN and iron-sulfur (Fe-S) centers, to quinones in the respiratory chain. The immediate electron acceptor for the enzyme in this species is believed to be ubiquinone. Couples the redox reaction to proton translocation (for every two electrons transferred, four hydrogen ions are translocated across the cytoplasmic membrane), and thus conserves the redox energy in a proton gradient. This is NADH-quinone oxidoreductase subunit K from Helicobacter pylori (strain G27).